A 102-amino-acid chain; its full sequence is Large ribosomal subunit protein bL21 (102 aa).

It belongs to the bacterial ribosomal protein bL21 family. Part of the 50S ribosomal subunit. Contacts protein L20.

In terms of biological role, this protein binds to 23S rRNA in the presence of protein L20. In Geobacillus thermodenitrificans (strain NG80-2), this protein is Large ribosomal subunit protein bL21.